Here is a 724-residue protein sequence, read N- to C-terminus: Transcription factor dcp-66 (724 aa).

Composition is skewed to polar residues over residues 1 to 12 (MAQVQQVPSSPM) and 56 to 70 (GASTSIDTDDLQLSP). 2 disordered regions span residues 1 to 23 (MAQVQQVPSSPMNGIPEKNGNGL) and 55 to 129 (NGAS…KRRL). Residues 85–95 (AQEKIKLKDDI) are compositionally biased toward basic and acidic residues. The span at 105 to 119 (DDDDMEDEELGDEIN) shows a compositional bias: acidic residues. The stretch at 186–216 (EEQLRERLNMRREAENQLREEEAKLLVLRKM) forms a coiled coil. Disordered stretches follow at residues 328-361 (KELSAAETNASASASPAVQQSQQAQQPQQAQITQ) and 523-590 (AAPA…QLQQ). The segment covering 332–358 (AAETNASASASPAVQQSQQAQQPQQAQ) has biased composition (low complexity). Polar residues-rich tracts occupy residues 527–541 (TSQTIPTSSTATVSS) and 551–564 (IPSSTGSSTPTQAV). A compositionally biased stretch (low complexity) spans 565–590 (KTSTPIHSTPKSSSSSAKKTAAQLQQ).

Expressed at low levels in excretory cell, pharynx, vulva, and posterior neurons in adults. Strongly expressed in the excretory cell and more weakly in the pharynx in larva. Embryonic expression in the excretory cell.

It is found in the nucleus. Transcription factor which binds to the 5'-CCATACATTA-3' motif found in the promoter region of pgp-12 and activates its expression in the excretory cell. This chain is Transcription factor dcp-66, found in Caenorhabditis elegans.